The sequence spans 578 residues: Putative diflavin flavoprotein A 2 (578 aa).

Residues 39–233 (QQGTTSNSYL…PPPRLYAPAH (195 aa)) form a zinc metallo-hydrolase region. Positions 262-404 (VALFYASAYG…AANEFAQALK (143 aa)) constitute a Flavodoxin-like domain. A flavodoxin-reductase-like region spans residues 429–578 (VNRVVGSLCV…TAIQHRKTSS (150 aa)).

The protein in the N-terminal section; belongs to the zinc metallo-hydrolase group 3 family. In the C-terminal section; belongs to the flavodoxin reductase family. The cofactor is Fe cation.

Its function is as follows. Mediates electron transfer from NADH to oxygen, reducing it to water. This modular protein has 3 redox cofactors, in other organisms the same activity requires 2 or 3 proteins. The protein is Putative diflavin flavoprotein A 2 (dfa2) of Thermosynechococcus vestitus (strain NIES-2133 / IAM M-273 / BP-1).